The sequence spans 416 residues: Na(+)/H(+) antiporter NhaA (416 aa).

The next 9 helical transmembrane spans lie at 18–38 (VGGAILLVAAAIALLWVNSPW), 59–79 (LTLADWTKDGLLAVFFFVAGL), 97–117 (ALPIIAAVGGVVTPALIAAVI), 127–147 (GWAIPVATDIAFALGVLALTG), 167–187 (LLAIILIAVLFTVGVSLLWLL), 265–285 (GICVPLFALFAAGVPLNATVF), 297–317 (VMLGLLLGKTIGIFGISWVAI), 333–353 (MFALSVLGAIGFTVSLLVAEL), and 363–383 (LAKAAVLITSLAASLAGSALL). The disordered stretch occupies residues 396 to 416 (ALELQPDEGDASDPSEGGSLR).

Belongs to the NhaA Na(+)/H(+) (TC 2.A.33) antiporter family.

The protein resides in the cell membrane. The enzyme catalyses Na(+)(in) + 2 H(+)(out) = Na(+)(out) + 2 H(+)(in). Its function is as follows. Na(+)/H(+) antiporter that extrudes sodium in exchange for external protons. In Nocardia farcinica (strain IFM 10152), this protein is Na(+)/H(+) antiporter NhaA.